A 100-amino-acid chain; its full sequence is Spleen trypsin inhibitor I (100 aa).

The first 21 residues, 1–21 (MKMSRLCLSIALLVLLGTLAA), serve as a signal peptide directing secretion. Positions 22–33 (STPGCDTSNQAK) are excised as a propeptide. The BPTI/Kunitz inhibitor domain occupies 40–90 (CLEPPYTGPCKAKMIRYFYNAKAGFCETFVYGGCKAKSNNFRSAEDCMRTC). Cystine bridges form between Cys40–Cys90, Cys49–Cys73, and Cys65–Cys86. A propeptide is located at residue Leu100.

It localises to the secreted. This Bos taurus (Bovine) protein is Spleen trypsin inhibitor I.